The chain runs to 236 residues: Glucosamine-6-phosphate deaminase (236 aa).

Residue Asp-62 is the Proton acceptor; for enolization step of the active site. Asn-128 (for ring-opening step) is an active-site residue. His-130 functions as the Proton acceptor; for ring-opening step in the catalytic mechanism. Catalysis depends on Glu-135, which acts as the For ring-opening step.

Belongs to the glucosamine/galactosamine-6-phosphate isomerase family. NagB subfamily.

The enzyme catalyses alpha-D-glucosamine 6-phosphate + H2O = beta-D-fructose 6-phosphate + NH4(+). It functions in the pathway amino-sugar metabolism; N-acetylneuraminate degradation; D-fructose 6-phosphate from N-acetylneuraminate: step 5/5. Catalyzes the reversible isomerization-deamination of glucosamine 6-phosphate (GlcN6P) to form fructose 6-phosphate (Fru6P) and ammonium ion. This chain is Glucosamine-6-phosphate deaminase, found in Pediococcus pentosaceus (strain ATCC 25745 / CCUG 21536 / LMG 10740 / 183-1w).